Consider the following 197-residue polypeptide: Isopentenyl-diphosphate Delta-isomerase (197 aa).

Mn(2+)-binding residues include His-41 and His-48. The Nudix hydrolase domain maps to 46-183; sequence QLHRAFSVFL…AWFMTVLDAA (138 aa). The active site involves Cys-83. Residue His-85 participates in Mn(2+) binding. Residue Glu-103 participates in Mg(2+) binding. Mn(2+) is bound by residues Glu-130 and Glu-132. Glu-132 is a catalytic residue.

Belongs to the IPP isomerase type 1 family. It depends on Mg(2+) as a cofactor. Requires Mn(2+) as cofactor.

It localises to the cytoplasm. It carries out the reaction isopentenyl diphosphate = dimethylallyl diphosphate. It functions in the pathway isoprenoid biosynthesis; dimethylallyl diphosphate biosynthesis; dimethylallyl diphosphate from isopentenyl diphosphate: step 1/1. Its function is as follows. Catalyzes the 1,3-allylic rearrangement of the homoallylic substrate isopentenyl (IPP) to its highly electrophilic allylic isomer, dimethylallyl diphosphate (DMAPP). This chain is Isopentenyl-diphosphate Delta-isomerase, found in Streptomyces griseus subsp. griseus (strain JCM 4626 / CBS 651.72 / NBRC 13350 / KCC S-0626 / ISP 5235).